We begin with the raw amino-acid sequence, 267 residues long: Outer membrane protein assembly factor BamD (267 aa).

The signal sequence occupies residues 1 to 16 (MKKILLTVSLGLALSA). C17 carries N-palmitoyl cysteine lipidation. C17 carries S-diacylglycerol cysteine lipidation.

Belongs to the BamD family. As to quaternary structure, part of the Bam complex.

The protein resides in the cell outer membrane. Its function is as follows. Part of the outer membrane protein assembly complex, which is involved in assembly and insertion of beta-barrel proteins into the outer membrane. Required for efficient transformation of Neisseria meningitidis by species-related DNA. The chain is Outer membrane protein assembly factor BamD from Neisseria meningitidis serogroup B (strain ATCC BAA-335 / MC58).